A 194-amino-acid chain; its full sequence is Imidazoleglycerol-phosphate dehydratase (194 aa).

The protein belongs to the imidazoleglycerol-phosphate dehydratase family.

The protein resides in the cytoplasm. It carries out the reaction D-erythro-1-(imidazol-4-yl)glycerol 3-phosphate = 3-(imidazol-4-yl)-2-oxopropyl phosphate + H2O. It participates in amino-acid biosynthesis; L-histidine biosynthesis; L-histidine from 5-phospho-alpha-D-ribose 1-diphosphate: step 6/9. This Ruminiclostridium cellulolyticum (strain ATCC 35319 / DSM 5812 / JCM 6584 / H10) (Clostridium cellulolyticum) protein is Imidazoleglycerol-phosphate dehydratase.